A 422-amino-acid chain; its full sequence is N-acylglucosamine 2-epimerase (422 aa).

The interval 185 to 206 is leucine-zipper; it reads LLNLVEQLGEADEELAGISAEL.

It belongs to the N-acylglucosamine 2-epimerase family. As to quaternary structure, homodimer. Forms a heterodimer with renin and inhibits its activity.

The catalysed reaction is an N-acyl-D-glucosamine = an N-acyl-D-mannosamine. The protein operates within amino-sugar metabolism; N-acetylneuraminate degradation. Catalyzes the interconversion of N-acetylglucosamine to N-acetylmannosamine. Involved in the N-glycolylneuraminic acid (Neu5Gc) degradation pathway. This Bos taurus (Bovine) protein is N-acylglucosamine 2-epimerase (RENBP).